A 162-amino-acid polypeptide reads, in one-letter code: Large ribosomal subunit protein uL10 (162 aa).

This sequence belongs to the universal ribosomal protein uL10 family. Part of the ribosomal stalk of the 50S ribosomal subunit. The N-terminus interacts with L11 and the large rRNA to form the base of the stalk. The C-terminus forms an elongated spine to which L12 dimers bind in a sequential fashion forming a multimeric L10(L12)X complex.

Functionally, forms part of the ribosomal stalk, playing a central role in the interaction of the ribosome with GTP-bound translation factors. The chain is Large ribosomal subunit protein uL10 from Aliarcobacter butzleri (strain RM4018) (Arcobacter butzleri).